A 205-amino-acid polypeptide reads, in one-letter code: Probable DNA-binding protein (205 aa).

The disordered stretch occupies residues 140-168 (GEGDGAPRPACPDFSTRGAETGNQGVQPG).

The protein is Probable DNA-binding protein of Homo sapiens (Human).